The following is a 662-amino-acid chain: Zinc finger protein 800 (662 aa).

A C2H2-type 1; degenerate zinc finger spans residues 69-91; sequence FECKLCRSLFRGLPNLITHKKFY. Lysine 132 participates in a covalent cross-link: Glycyl lysine isopeptide (Lys-Gly) (interchain with G-Cter in SUMO2). 2 disordered regions span residues 172 to 197 and 205 to 224; these read ETSS…PPSI and AAPT…TSDS. Residues 205-216 are compositionally biased toward low complexity; the sequence is AAPTEEQPQESQ. The C2H2-type 2 zinc-finger motif lies at 231–254; it reads LICCLCRKEFNSRRGVRRHIRKVH. Lysine 280 is covalently cross-linked (Glycyl lysine isopeptide (Lys-Gly) (interchain with G-Cter in SUMO2)). The segment at 288-311 adopts a C2H2-type 3 zinc-finger fold; that stretch reads RSCPVCCKSFATKANVRRHFDEVH. Serine 318 carries the phosphoserine modification. The disordered stretch occupies residues 319–349; it reads ITPDIATKPGQPLFLDSASPKKSFKTRKQKS. Threonine 320 bears the Phosphothreonine mark. At serine 337 the chain carries Phosphoserine. Over residues 340-349 the composition is skewed to basic residues; it reads KSFKTRKQKS. The segment at 357–382 adopts a C2H2-type 4 zinc-finger fold; that stretch reads TACKCLLCKRKYSSQIMLKRHMQIVH. Residues 389–473 are disordered; the sequence is ANSKREKGPN…AGGQQKTRKP (85 aa). Residue lysine 392 forms a Glycyl lysine isopeptide (Lys-Gly) (interchain with G-Cter in SUMO2) linkage. Polar residues predominate over residues 414-434; it reads VESSPPSITHSPQNELKGTNH. A phosphoserine mark is found at serine 420, serine 424, serine 453, serine 455, serine 458, and serine 460. Over residues 456–468 the composition is skewed to low complexity; sequence PKSASPSAAGGQQ. Residue lysine 474 forms a Glycyl lysine isopeptide (Lys-Gly) (interchain with G-Cter in SUMO2) linkage. 2 consecutive C2H2-type zinc fingers follow at residues 484–506 and 517–540; these read LYCK…IELH and YKCP…TVVH. Disordered stretches follow at residues 573–597 and 633–662; these read RGPS…PSKK and HHKK…KALV. The segment covering 575–587 has biased composition (basic and acidic residues); the sequence is PSREEAKHNDSKQ. A Glycyl lysine isopeptide (Lys-Gly) (interchain with G-Cter in SUMO2) cross-link involves residue lysine 597. The C2H2-type 7 zinc-finger motif lies at 616-638; the sequence is HRCNKCGKAFAKKTYLEHHKKTH. The segment covering 651 to 662 has biased composition (basic residues); the sequence is TKGRSTRSKALV.

It belongs to the krueppel C2H2-type zinc-finger protein family.

Its subcellular location is the nucleus. Functionally, may be involved in transcriptional regulation. This Mus musculus (Mouse) protein is Zinc finger protein 800 (Znf800).